A 470-amino-acid polypeptide reads, in one-letter code: Glutamate--tRNA ligase (470 aa).

A 'HIGH' region motif is present at residues 9–19; that stretch reads PSPTGFLHVGG. Positions 236-240 match the 'KMSKS' region motif; that stretch reads RLSKR. K239 is a binding site for ATP.

It belongs to the class-I aminoacyl-tRNA synthetase family. Glutamate--tRNA ligase type 1 subfamily. As to quaternary structure, monomer.

The protein resides in the cytoplasm. The enzyme catalyses tRNA(Glu) + L-glutamate + ATP = L-glutamyl-tRNA(Glu) + AMP + diphosphate. Its function is as follows. Catalyzes the attachment of glutamate to tRNA(Glu) in a two-step reaction: glutamate is first activated by ATP to form Glu-AMP and then transferred to the acceptor end of tRNA(Glu). The protein is Glutamate--tRNA ligase of Legionella pneumophila subsp. pneumophila (strain Philadelphia 1 / ATCC 33152 / DSM 7513).